Reading from the N-terminus, the 116-residue chain is Large ribosomal subunit protein bL20 (116 aa).

It belongs to the bacterial ribosomal protein bL20 family.

Its function is as follows. Binds directly to 23S ribosomal RNA and is necessary for the in vitro assembly process of the 50S ribosomal subunit. It is not involved in the protein synthesizing functions of that subunit. The sequence is that of Large ribosomal subunit protein bL20 from Helicobacter pylori (strain P12).